We begin with the raw amino-acid sequence, 349 residues long: ATP phosphoribosyltransferase regulatory subunit (349 aa).

The segment at 327-349 is disordered; the sequence is GRGRGVRPRRASARGGRARARPR. A compositionally biased stretch (basic residues) spans 330-349; it reads RGVRPRRASARGGRARARPR.

This sequence belongs to the class-II aminoacyl-tRNA synthetase family. HisZ subfamily. As to quaternary structure, heteromultimer composed of HisG and HisZ subunits.

It is found in the cytoplasm. It participates in amino-acid biosynthesis; L-histidine biosynthesis; L-histidine from 5-phospho-alpha-D-ribose 1-diphosphate: step 1/9. Functionally, required for the first step of histidine biosynthesis. May allow the feedback regulation of ATP phosphoribosyltransferase activity by histidine. This chain is ATP phosphoribosyltransferase regulatory subunit, found in Anaeromyxobacter sp. (strain K).